Here is a 782-residue protein sequence, read N- to C-terminus: General transcription and DNA repair factor IIH helicase/translocase subunit XPB (782 aa).

The segment covering 1 to 11 has biased composition (basic and acidic residues); the sequence is MGKRDRADRDK. 2 disordered regions span residues 1–51 and 218–241; these read MGKR…ESGT and SAIS…PQGK. The Nuclear localization signal motif lies at 6-18; sequence RADRDKKKSRKRH. The span at 21–30 shows a compositional bias: acidic residues; sequence DEEDDEEDAP. Polar residues predominate over residues 218–236; it reads SAISKTAESSGGPSTSRVT. The region spanning 327–488 is the Helicase ATP-binding domain; the sequence is MFGNGRARSG…DLNFLIGPKL (162 aa). 340–347 lines the ATP pocket; sequence LPCGAGKS. Residues 441-444 carry the DEVH box motif; sequence DEVH. A Helicase C-terminal domain is found at 542–702; the sequence is RACQFLIKFH…LAGMEEEDLA (161 aa). ATP contacts are provided by Arg-642 and Arg-645. Position 686 is a phosphoserine (Ser-686). Ser-751 is modified (phosphoserine; by CK2).

It belongs to the helicase family. RAD25/XPB subfamily. As to quaternary structure, component of the 7-subunit TFIIH core complex composed of XPB/ERCC3, XPD/ERCC2, GTF2H1, GTF2H2, GTF2H3, GTF2H4 and GTF2H5, which is active in NER. The core complex associates with the 3-subunit CDK-activating kinase (CAK) module composed of CCNH/cyclin H, CDK7 and MNAT1 to form the 10-subunit holoenzyme (holo-TFIIH) active in transcription. Interacts with PUF60. Interacts with ATF7IP. Interacts with KAT2A; leading to KAT2A recruitment to promoters and acetylation of histones. Part of TBP-based Pol II pre-initiation complex (PIC), in which Pol II core assembles with general transcription factors and other specific initiation factors including GTF2E1, GTF2E2, GTF2F1, GTF2F2, TCEA1, ERCC2, ERCC3, GTF2H2, GTF2H3, GTF2H4, GTF2H5, GTF2A1, GTF2A2, GTF2B and TBP; this large multi-subunit PIC complex mediates DNA unwinding and targets Pol II core to the transcription start site where the first phosphodiester bond forms. In terms of assembly, (Microbial infection) Interacts with Epstein-Barr virus EBNA2. Post-translationally, phosphorylation on Ser-751 by CK2 controls the 5'-excision activity of ERCC1-XPF endonuclease; phosphorylated protein inhibits the excision activity and thus NER. Dephosphorylation reactivates the 5'-excision step. Phosphorylation has no effect on transcription or the 3'-5' helicase activity.

The protein localises to the nucleus. It catalyses the reaction Couples ATP hydrolysis with the unwinding of duplex DNA by translocating in the 3'-5' direction.. The catalysed reaction is ATP + H2O = ADP + phosphate + H(+). Phosphorylation on Ser-751 by CK2 controls the 5'-excision activity of ERCC1-XPF endonuclease; phosphorylated protein inhibits the excision activity and thus NER. ATPase activity is stimulated by TFIIH subunit p52 (GTF2H4). DNA translocase activity by this subunit in TFIIH is stimulated by XPA, ERCC5/XPG and XFP plus ERCC1; translocase activity is sensitive to triptolide which targets this enzyme. In terms of biological role, ATP-dependent 3'-5' DNA helicase/translocase. Binds dsDNA rather than ssDNA, unzipping it in a translocase rather than classical helicase activity. Component of the general transcription and DNA repair factor IIH (TFIIH) core complex. When complexed to CDK-activating kinase (CAK), involved in RNA transcription by RNA polymerase II. The ATPase activity of XPB/ERCC3, but not its helicase activity, is required for DNA opening; it may wrap around the damaged DNA wedging it open, causing localized melting that allows XPD/ERCC2 helicase to anchor. In transcription, TFIIH has an essential role in transcription initiation. When the pre-initiation complex (PIC) has been established, TFIIH is required for promoter opening and promoter escape. The ATP-dependent helicase activity of XPB/ERCC3 is required for promoter opening and promoter escape. In transcription pre-initiation complexes induces and propagates a DNA twist to open DNA. Also involved in transcription-coupled nucleotide excision repair (NER) of damaged DNA. In NER, TFIIH acts by opening DNA around the lesion to allow the excision of the damaged oligonucleotide and its replacement by a new DNA fragment. The structure of the TFIIH transcription complex differs from the NER-TFIIH complex; large movements by XPD/ERCC2 and XPB/ERCC3 are stabilized by XPA. XPA retains XPB/ERCC3 at the 5' end of a DNA bubble (mimicking DNA damage). The chain is General transcription and DNA repair factor IIH helicase/translocase subunit XPB from Homo sapiens (Human).